A 305-amino-acid polypeptide reads, in one-letter code: Nitrogen assimilation regulatory protein nac (305 aa).

Positions 1-58 (MNLRRLKYFVKIVDIGSLTQAAEVLHIAQPALSQQVATLEGEMDQQLLIRTKRGVTPT) constitute an HTH lysR-type domain. The segment at residues 18-37 (LTQAAEVLHIAQPALSQQVA) is a DNA-binding region (H-T-H motif).

Belongs to the LysR transcriptional regulatory family.

Functionally, transcriptional activator for the hut, put and ure operons and repressor for the gdh and gltB operons in response to nitrogen limitation. Negative regulator of its own expression. This is Nitrogen assimilation regulatory protein nac (nac) from Klebsiella aerogenes (Enterobacter aerogenes).